We begin with the raw amino-acid sequence, 361 residues long: RNA 3'-terminal phosphate cyclase (361 aa).

ATP is bound by residues glutamine 109 and 293-297; that span reads HLADQ. The active-site Tele-AMP-histidine intermediate is histidine 319.

Belongs to the RNA 3'-terminal cyclase family. Type 1 subfamily.

The protein resides in the cytoplasm. The catalysed reaction is a 3'-end 3'-phospho-ribonucleotide-RNA + ATP = a 3'-end 2',3'-cyclophospho-ribonucleotide-RNA + AMP + diphosphate. Functionally, catalyzes the conversion of 3'-phosphate to a 2',3'-cyclic phosphodiester at the end of RNA. The mechanism of action of the enzyme occurs in 3 steps: (A) adenylation of the enzyme by ATP; (B) transfer of adenylate to an RNA-N3'P to produce RNA-N3'PP5'A; (C) and attack of the adjacent 2'-hydroxyl on the 3'-phosphorus in the diester linkage to produce the cyclic end product. The biological role of this enzyme is unknown but it is likely to function in some aspects of cellular RNA processing. The protein is RNA 3'-terminal phosphate cyclase of Methylococcus capsulatus (strain ATCC 33009 / NCIMB 11132 / Bath).